The sequence spans 443 residues: COP9 signalosome complex subunit 2 (443 aa).

The PCI domain occupies 254–416 (AHTDFFEAFK…QLLELDHQKR (163 aa)).

It belongs to the CSN2 family. In terms of assembly, component of the CSN complex, probably composed of cops1, cops2, cops3, cops4, cops5, cops6, cops7, cops8 and cops9.

It localises to the cytoplasm. The protein resides in the nucleus. Its function is as follows. Essential component of the COP9 signalosome complex (CSN), a complex involved in various cellular and developmental processes. The CSN complex is an essential regulator of the ubiquitin (Ubl) conjugation pathway by mediating the deneddylation of the cullin subunits of E3 ligase complexes, leading to modify the Ubl ligase activity. The protein is COP9 signalosome complex subunit 2 (cops2) of Danio rerio (Zebrafish).